Here is a 72-residue protein sequence, read N- to C-terminus: Translation initiation factor IF-1 (72 aa).

In terms of domain architecture, S1-like spans 1–72 (MAKEDCIEMQ…SKARIIFRAR (72 aa)).

The protein belongs to the IF-1 family. As to quaternary structure, component of the 30S ribosomal translation pre-initiation complex which assembles on the 30S ribosome in the order IF-2 and IF-3, IF-1 and N-formylmethionyl-tRNA(fMet); mRNA recruitment can occur at any time during PIC assembly.

Its subcellular location is the cytoplasm. One of the essential components for the initiation of protein synthesis. Stabilizes the binding of IF-2 and IF-3 on the 30S subunit to which N-formylmethionyl-tRNA(fMet) subsequently binds. Helps modulate mRNA selection, yielding the 30S pre-initiation complex (PIC). Upon addition of the 50S ribosomal subunit IF-1, IF-2 and IF-3 are released leaving the mature 70S translation initiation complex. This is Translation initiation factor IF-1 from Haemophilus ducreyi (strain 35000HP / ATCC 700724).